Reading from the N-terminus, the 510-residue chain is NAD(P)H-quinone oxidoreductase subunit 2 A, chloroplastic (510 aa).

14 helical membrane-spanning segments follow: residues 31-51 (FIFP…IDLT), 59-79 (WFYF…LFRW), 99-119 (IFQF…VEYI), 124-144 (MAIT…MFLC), 149-169 (LITI…LSGY), 184-204 (LLMG…LYGL), 229-249 (ISIA…LAPF), 261-281 (PTPV…ALAT), 295-315 (WHLL…LLAI), 323-343 (MLAY…IVGD), 354-374 (YMLF…LFGL), 395-415 (ALSL…AGFF), 418-438 (LYLF…IGLL), and 484-504 (MTVC…ILAI).

The protein belongs to the complex I subunit 2 family. NDH is composed of at least 16 different subunits, 5 of which are encoded in the nucleus.

It localises to the plastid. It is found in the chloroplast thylakoid membrane. It carries out the reaction a plastoquinone + NADH + (n+1) H(+)(in) = a plastoquinol + NAD(+) + n H(+)(out). The enzyme catalyses a plastoquinone + NADPH + (n+1) H(+)(in) = a plastoquinol + NADP(+) + n H(+)(out). In terms of biological role, NDH shuttles electrons from NAD(P)H:plastoquinone, via FMN and iron-sulfur (Fe-S) centers, to quinones in the photosynthetic chain and possibly in a chloroplast respiratory chain. The immediate electron acceptor for the enzyme in this species is believed to be plastoquinone. Couples the redox reaction to proton translocation, and thus conserves the redox energy in a proton gradient. This Saccharum hybrid (Sugarcane) protein is NAD(P)H-quinone oxidoreductase subunit 2 A, chloroplastic.